The sequence spans 76 residues: MSFQEQQCKQPCQPPPVCPPPKCPEPCPLPKCPEPCPPPKCPEPCPEPCLPSPCQQKCPPVQTPPPCQQKCPPKSK.

3 tandem repeats follow at residues 21-29 (PKCPEPCPL), 30-38 (PKCPEPCPP), and 39-47 (PKCPEPCPE). Positions 21–47 (PKCPEPCPLPKCPEPCPPPKCPEPCPE) are 3 X 9 AA approximate tandem repeats. A disordered region spans residues 55 to 76 (QQKCPPVQTPPPCQQKCPPKSK).

The protein belongs to the cornifin (SPRR) family. Expressed in uterus.

The protein localises to the cytoplasm. In terms of biological role, cross-linked envelope protein of keratinocytes. It is a keratinocyte protein that first appears in the cell cytosol, but ultimately becomes cross-linked to membrane proteins by transglutaminase. All that results in the formation of an insoluble envelope beneath the plasma membrane. In Mus musculus (Mouse), this protein is Small proline-rich protein 2G (Sprr2g).